We begin with the raw amino-acid sequence, 181 residues long: Photosystem I assembly protein Ycf4 (181 aa).

2 helical membrane-spanning segments follow: residues 19 to 41 (YAWCFILMTGGIGFCLTGVGSYF) and 61 to 83 (IVMMFYGTIAILFSLFLMYSIFT).

This sequence belongs to the Ycf4 family.

Its subcellular location is the plastid. The protein resides in the chloroplast thylakoid membrane. Functionally, seems to be required for the assembly of the photosystem I complex. The protein is Photosystem I assembly protein Ycf4 of Guillardia theta (Cryptophyte).